The chain runs to 132 residues: uncharacterized protein (132 aa).

Residues 113 to 132 (LDPQSPLHSPPLSTSPDSRR) form a disordered region.

This is an uncharacterized protein from Saccharomyces cerevisiae (strain ATCC 204508 / S288c) (Baker's yeast).